The primary structure comprises 1047 residues: Atrial natriuretic peptide receptor 2 (1047 aa).

An N-terminal signal peptide occupies residues 1–16 (MALPSLLLVVAALAGG). The Extracellular segment spans residues 17-458 (VRPPGARNLT…DKTPLSTLAI (442 aa)). Residues Asn-24 and Asn-35 are each glycosylated (N-linked (GlcNAc...) asparagine). Residues Cys-75 and Cys-101 are joined by a disulfide bond. 5 N-linked (GlcNAc...) asparagine glycosylation sites follow: Asn-161, Asn-195, Asn-244, Asn-277, and Asn-349. A helical transmembrane segment spans residues 459 to 478 (VALGTGVTFIMFGVSSFLIF). Over 479-1047 (RKLMLEKELA…GEQKGPPGLL (569 aa)) the chain is Cytoplasmic. Residue Ser-513 is modified to Phosphoserine. A Protein kinase domain is found at 513-786 (SRLTLSLRGS…PDFGQIKGFI (274 aa)). Thr-516 bears the Phosphothreonine mark. Ser-518, Ser-522, Ser-523, and Ser-526 each carry phosphoserine. Thr-529 bears the Phosphothreonine mark. The 131-residue stretch at 861 to 991 (TIYFSDIVGF…DTVNTASRME (131 aa)) folds into the Guanylate cyclase domain.

The protein belongs to the adenylyl cyclase class-4/guanylyl cyclase family. In terms of processing, phosphorylated. Phosphorylation of the protein kinase-like domain is required for full activation by CNP. Glycosylated. In terms of tissue distribution, widely expressed. Expressed in the columnar proliferating and prehypertrophic chondrocyte layers of the tibia.

It localises to the cell membrane. It catalyses the reaction GTP = 3',5'-cyclic GMP + diphosphate. Its function is as follows. Receptor for the C-type natriuretic peptide NPPC/CNP hormone. Has guanylate cyclase activity upon binding of its ligand. May play a role in the regulation of skeletal growth. The polypeptide is Atrial natriuretic peptide receptor 2 (Npr2) (Mus musculus (Mouse)).